We begin with the raw amino-acid sequence, 931 residues long: Isoleucine--tRNA ligase (931 aa).

Positions 1–14 (MDYSKTLNLPQTQF) are enriched in polar residues. Residues 1–25 (MDYSKTLNLPQTQFPMRGNLPQREP) are disordered. The short motif at 57–67 (PYANGHIHLGH) is the 'HIGH' region element. Glu559 serves as a coordination point for L-isoleucyl-5'-AMP. Residues 600–604 (KMSKS) carry the 'KMSKS' region motif. Lys603 is an ATP binding site. Zn(2+) contacts are provided by Cys898, Cys901, Cys918, and Cys921.

Belongs to the class-I aminoacyl-tRNA synthetase family. IleS type 1 subfamily. As to quaternary structure, monomer. It depends on Zn(2+) as a cofactor.

Its subcellular location is the cytoplasm. The enzyme catalyses tRNA(Ile) + L-isoleucine + ATP = L-isoleucyl-tRNA(Ile) + AMP + diphosphate. Catalyzes the attachment of isoleucine to tRNA(Ile). As IleRS can inadvertently accommodate and process structurally similar amino acids such as valine, to avoid such errors it has two additional distinct tRNA(Ile)-dependent editing activities. One activity is designated as 'pretransfer' editing and involves the hydrolysis of activated Val-AMP. The other activity is designated 'posttransfer' editing and involves deacylation of mischarged Val-tRNA(Ile). The polypeptide is Isoleucine--tRNA ligase (Desulforamulus reducens (strain ATCC BAA-1160 / DSM 100696 / MI-1) (Desulfotomaculum reducens)).